Consider the following 263-residue polypeptide: Acyl-[acyl-carrier-protein]--UDP-N-acetylglucosamine O-acyltransferase (263 aa).

This sequence belongs to the transferase hexapeptide repeat family. LpxA subfamily. In terms of assembly, homotrimer.

The protein resides in the cytoplasm. It carries out the reaction a (3R)-hydroxyacyl-[ACP] + UDP-N-acetyl-alpha-D-glucosamine = a UDP-3-O-[(3R)-3-hydroxyacyl]-N-acetyl-alpha-D-glucosamine + holo-[ACP]. It participates in glycolipid biosynthesis; lipid IV(A) biosynthesis; lipid IV(A) from (3R)-3-hydroxytetradecanoyl-[acyl-carrier-protein] and UDP-N-acetyl-alpha-D-glucosamine: step 1/6. Functionally, involved in the biosynthesis of lipid A, a phosphorylated glycolipid that anchors the lipopolysaccharide to the outer membrane of the cell. This Caulobacter vibrioides (strain ATCC 19089 / CIP 103742 / CB 15) (Caulobacter crescentus) protein is Acyl-[acyl-carrier-protein]--UDP-N-acetylglucosamine O-acyltransferase.